We begin with the raw amino-acid sequence, 536 residues long: CTP synthase (536 aa).

The tract at residues M1–I266 is amidoligase domain. S14 provides a ligand contact to CTP. S14 contacts UTP. ATP-binding positions include S15–L20 and D72. Residues D72 and E140 each coordinate Mg(2+). CTP is bound by residues D147 to E149, K187 to Q192, and K223. Residues K187–Q192 and K223 each bind UTP. One can recognise a Glutamine amidotransferase type-1 domain in the interval R292–K534. Position 354 (G354) interacts with L-glutamine. C381 acts as the Nucleophile; for glutamine hydrolysis in catalysis. L-glutamine contacts are provided by residues L382–Q385, E405, and R462. Residues H507 and E509 contribute to the active site.

Belongs to the CTP synthase family. In terms of assembly, homotetramer.

It catalyses the reaction UTP + L-glutamine + ATP + H2O = CTP + L-glutamate + ADP + phosphate + 2 H(+). The catalysed reaction is L-glutamine + H2O = L-glutamate + NH4(+). The enzyme catalyses UTP + NH4(+) + ATP = CTP + ADP + phosphate + 2 H(+). Its pathway is pyrimidine metabolism; CTP biosynthesis via de novo pathway; CTP from UDP: step 2/2. Allosterically activated by GTP, when glutamine is the substrate; GTP has no effect on the reaction when ammonia is the substrate. The allosteric effector GTP functions by stabilizing the protein conformation that binds the tetrahedral intermediate(s) formed during glutamine hydrolysis. Inhibited by the product CTP, via allosteric rather than competitive inhibition. In terms of biological role, catalyzes the ATP-dependent amination of UTP to CTP with either L-glutamine or ammonia as the source of nitrogen. Regulates intracellular CTP levels through interactions with the four ribonucleotide triphosphates. The polypeptide is CTP synthase (Geobacter sulfurreducens (strain ATCC 51573 / DSM 12127 / PCA)).